We begin with the raw amino-acid sequence, 24 residues long: L-amino-acid oxidase (24 aa).

This sequence belongs to the flavin monoamine oxidase family. FIG1 subfamily. Homodimer; non-covalently linked. The cofactor is FAD. Post-translationally, N-glycosylated. In terms of tissue distribution, expressed by the venom gland.

Its subcellular location is the secreted. The catalysed reaction is an L-alpha-amino acid + O2 + H2O = a 2-oxocarboxylate + H2O2 + NH4(+). Catalyzes an oxidative deamination of predominantly hydrophobic and aromatic L-amino acids, thus producing hydrogen peroxide that may contribute to the diverse toxic effects of this enzyme. Exhibits diverse biological activities, such as hemorrhage, hemolysis, edema, apoptosis, and antiparasitic activities. This protein has antibacterial activity (against E.coli, S.aureus, and B.dysenteriae), cytotoxic activity, as well as an ability to induce platelet aggregation. Effects of snake L-amino oxidases on platelets are controversial, since they either induce aggregation or inhibit agonist-induced aggregation. These different effects are probably due to different experimental conditions. The protein is L-amino-acid oxidase of Protobothrops mucrosquamatus (Taiwan habu).